A 182-amino-acid chain; its full sequence is uncharacterized protein (182 aa).

2 disordered regions span residues 17–53 (AVSQ…QGSK) and 128–159 (DSLG…PKRS). The span at 42–53 (PQPQCPSAQGSK) shows a compositional bias: polar residues. The segment covering 129–138 (SLGSSASSSS) has biased composition (low complexity).

This is an uncharacterized protein from Homo sapiens (Human).